A 142-amino-acid polypeptide reads, in one-letter code: Hemoglobin subunit alpha (142 aa).

Residues 2 to 142 form the Globin domain; sequence VLSAADKTNV…VSTVLTSKYR (141 aa). Serine 4 carries the phosphoserine modification. N6-succinyllysine is present on lysine 8. At threonine 9 the chain carries Phosphothreonine. N6-succinyllysine is present on lysine 12. N6-acetyllysine; alternate is present on lysine 17. Residue lysine 17 is modified to N6-succinyllysine; alternate. At lysine 41 the chain carries N6-succinyllysine. Serine 50 is modified (phosphoserine). Histidine 59 provides a ligand contact to O2. Histidine 88 lines the heme b pocket. Serine 103 carries the phosphoserine modification. Phosphothreonine is present on threonine 109. The residue at position 125 (serine 125) is a Phosphoserine. Phosphothreonine is present on residues threonine 135 and threonine 138. Serine 139 is modified (phosphoserine).

The protein belongs to the globin family. As to quaternary structure, heterotetramer of two alpha chains and two beta chains. In terms of tissue distribution, red blood cells.

Its function is as follows. Involved in oxygen transport from the lung to the various peripheral tissues. Hemopressin acts as an antagonist peptide of the cannabinoid receptor CNR1. Hemopressin-binding efficiently blocks cannabinoid receptor CNR1 and subsequent signaling. This chain is Hemoglobin subunit alpha (HBA), found in Equus zebra (Mountain zebra).